The chain runs to 365 residues: Chorismate synthase (365 aa).

Residues methionine 41–arginine 60 form a disordered region. Residues arginine 48 and arginine 54 each contribute to the NADP(+) site. FMN-binding positions include arginine 125–serine 127, asparagine 238–alanine 239, glycine 278, lysine 293–serine 297, and arginine 319.

This sequence belongs to the chorismate synthase family. In terms of assembly, homotetramer. FMNH2 is required as a cofactor.

It carries out the reaction 5-O-(1-carboxyvinyl)-3-phosphoshikimate = chorismate + phosphate. It participates in metabolic intermediate biosynthesis; chorismate biosynthesis; chorismate from D-erythrose 4-phosphate and phosphoenolpyruvate: step 7/7. Its function is as follows. Catalyzes the anti-1,4-elimination of the C-3 phosphate and the C-6 proR hydrogen from 5-enolpyruvylshikimate-3-phosphate (EPSP) to yield chorismate, which is the branch point compound that serves as the starting substrate for the three terminal pathways of aromatic amino acid biosynthesis. This reaction introduces a second double bond into the aromatic ring system. This is Chorismate synthase from Shewanella amazonensis (strain ATCC BAA-1098 / SB2B).